A 72-amino-acid polypeptide reads, in one-letter code: Protein SlyX (72 aa).

The segment at 53-72 (KSSQSSMLARPEDETPPPHY) is disordered.

It belongs to the SlyX family.

The protein is Protein SlyX of Proteus mirabilis (strain HI4320).